Here is a 73-residue protein sequence, read N- to C-terminus: Translation initiation factor IF-1 3 (73 aa).

The S1-like domain maps to 1-72 (MAKEELVEFG…TKGRINYRHK (72 aa)).

This sequence belongs to the IF-1 family. In terms of assembly, component of the 30S ribosomal translation pre-initiation complex which assembles on the 30S ribosome in the order IF-2 and IF-3, IF-1 and N-formylmethionyl-tRNA(fMet); mRNA recruitment can occur at any time during PIC assembly.

The protein localises to the cytoplasm. In terms of biological role, one of the essential components for the initiation of protein synthesis. Stabilizes the binding of IF-2 and IF-3 on the 30S subunit to which N-formylmethionyl-tRNA(fMet) subsequently binds. Helps modulate mRNA selection, yielding the 30S pre-initiation complex (PIC). Upon addition of the 50S ribosomal subunit IF-1, IF-2 and IF-3 are released leaving the mature 70S translation initiation complex. This Cupriavidus pinatubonensis (strain JMP 134 / LMG 1197) (Cupriavidus necator (strain JMP 134)) protein is Translation initiation factor IF-1 3.